Consider the following 434-residue polypeptide: Ribonuclease T2-like (434 aa).

Residues 1 to 18 (MLLKNLHSLLQLPIFSNG) form the signal peptide. Intrachain disulfides connect C27–C46, C35–C94, C45–C171, C102–C163, and C241–C277. Residues N37 and N70 are each glycosylated (N-linked (GlcNAc...) asparagine). H87 is an active-site residue. N-linked (GlcNAc...) asparagine glycans are attached at residues N103 and N123. Catalysis depends on residues E156 and H160.

The protein belongs to the RNase T2 family. N-glycosylated.

Its subcellular location is the vacuole lumen. It localises to the cytoplasm. It catalyses the reaction a ribonucleotidyl-ribonucleotide-RNA + H2O = a 3'-end 3'-phospho-ribonucleotide-RNA + a 5'-end dephospho-ribonucleoside-RNA + H(+). Functionally, rnase which modulates cell survival under stress conditions. Released from the vacuole to the cytoplasm during stress to promote tRNA and rRNA cleavage and to activate separately a downstream pathway that promotes cell death. Involved in cell size, vacuolar morphology and growth at high temperatures and high salt concentration. This is Ribonuclease T2-like (RNY1) from Saccharomyces cerevisiae (strain ATCC 204508 / S288c) (Baker's yeast).